Reading from the N-terminus, the 453-residue chain is O-glucose prenyltransferase PaPT (453 aa).

Alanine 95–proline 96 provides a ligand contact to L-tryptophan. Substrate-binding residues include lysine 210, tyrosine 212, arginine 279, lysine 281, tyrosine 283, tyrosine 368, and tyrosine 435.

The protein belongs to the tryptophan dimethylallyltransferase family.

Its pathway is mycotoxin biosynthesis. Its function is as follows. O-glucose prenyltransferase; part of the 2 gene clusters that mediate the biosynthesis of fusicoccins, diterpene glucosides that display phytohormone-like activity and function as potent activators of plasma membrane H(+)-ATPases in plants by modifying 14-3-3 proteins and cause the plant disease constriction canker. The first step in the pathway is performed by the fusicoccadiene synthase PaFS that possesses both prenyl transferase and terpene cyclase activity, converting isopentenyl diphosphate and dimethylallyl diphosphate into geranylgeranyl diphosphate (GGDP) and successively converting GGDP into fusicocca-2,10(14)-diene, a precursor for fusicoccin H. The second step is the oxidation at the C-8 position by the cytochrome P450 monooxygenase PaP450-2 to yield fusicocca-2,10(14)-diene-8-beta-ol. The cytochrome P450 monooxygenase PaP450-1 then catalyzes the hydroxylation at the C-16 position to produce fusicocca-2,10(14)-diene-8-beta,16-diol. The dioxygenase fc-dox then catalyzes the 16-oxydation of fusicocca-2,10(14)-diene-8-beta,16-diol to yield an aldehyde (8-beta-hydroxyfusicocca-1,10(14)-dien-16-al). The short-chain dehydrogenase/reductase fc-sdr catalyzes the reduction of the aldehyde to yield fusicocca-1,10(14)-diene-8-beta,16-diol. The next step is the hydroxylation at C-9 performed by the cytochrome P450 monooxygenase PaP450-3 that leads to fusicoccin H aglycon which is glycosylated to fusicoccin H by the O-glycosyltransferase PaGT. Hydroxylation at C-12 by the cytochrome P450 monooxygenase PaP450-4 leads then to the production of fusicoccin Q and is followed by methylation by the O-methyltransferase PaMT to yield fusicoccin P. Fusicoccin P is further converted to fusicoccin J via prenylation by the O-glucose prenyltransferase PaPT. Cytochrome P450 monooxygenase PaP450-5 then performs hydroxylation at C-19 to yield dideacetyl-fusicoccin A which is acetylated to 3'-O-deacetyl-fusicoccin A by the O-acetyltransferase PaAT-2. Finally, a another acetylation by the O-acetyltransferase PaAT-1 yields fusicoccin A. In Phomopsis amygdali (Fusicoccum amygdali), this protein is O-glucose prenyltransferase PaPT.